Reading from the N-terminus, the 153-residue chain is Agglutinin (153 aa).

Beta-D-galactosyl-(1-&gt;3)-N-acetyl-D-galactosamine contacts are provided by residues 22 to 25 (NAWE) and asparagine 46. The 96-residue stretch at 58-153 (GDSAEYLIIN…DNQKWYFDAK (96 aa)) folds into the Ricin B-type lectin domain.

In terms of assembly, homodimer.

Functionally, lectin that primarily recognizes glycans with a non-reducing terminal N-acetylgalactosamine (GalNAc), with a preference for the alpha- over the beta-anomer. Can also bind non-reducing terminal galactose (Gal) residues but with a lower affinity. Strongly interacts with glycolipid type glycans with terminal non-reducing Gal or GalNAc but fails to bind sialylated or fucosylated forms of the same glycans. Strongly interacts with galactosylated N-glycans, displaying highest affinity for alpha-1-3 branched mono-antennary N-glycans but also binding to multi-antennary glycans. This Sclerotinia sclerotiorum (strain ATCC 18683 / 1980 / Ss-1) (White mold) protein is Agglutinin.